Here is a 318-residue protein sequence, read N- to C-terminus: Porphobilinogen deaminase (318 aa).

Cys241 carries the post-translational modification S-(dipyrrolylmethanemethyl)cysteine.

It belongs to the HMBS family. As to quaternary structure, monomer. It depends on dipyrromethane as a cofactor.

It carries out the reaction 4 porphobilinogen + H2O = hydroxymethylbilane + 4 NH4(+). The protein operates within porphyrin-containing compound metabolism; protoporphyrin-IX biosynthesis; coproporphyrinogen-III from 5-aminolevulinate: step 2/4. Functionally, tetrapolymerization of the monopyrrole PBG into the hydroxymethylbilane pre-uroporphyrinogen in several discrete steps. The protein is Porphobilinogen deaminase of Geotalea daltonii (strain DSM 22248 / JCM 15807 / FRC-32) (Geobacter daltonii).